We begin with the raw amino-acid sequence, 397 residues long: MMLSIVRSVDVVLEIDLAAIRANFQKISTLVGDKVKVAAVVKSDAYGLGLVDIARTLIDAGCDLLFVANLDEALLLRSSFSRVAIAVFRDEFDRFGTWYRSHGLIPVVNNCKELHAVGTAGEPQSYFLNVETGFSRFGLSVGDIQREYLLRTFERYRPSIVLSHLACGECISDPMNQLQRDRFRTVYDLLKPTRGSLSASAGVWLGKSYHFDMVRVGSALYGIHNAGVQTNPLKPVVKLRARILDVRSVPAGEAVGYGATFRTDRASRVAIVGIGYKHGLPWSCANKIFVRLAEYSAPSIGRISMEYMIIDITDVPARRCSPGTFAELLSEDFTVNDLGAAAGVSPQEALTRLGAGCTRKYLNLFPPSAAFTANRPTEAMSNPSRAKSRPMDKQALI.

Lys-42 serves as the catalytic Proton acceptor; specific for D-alanine. Lys-42 carries the post-translational modification N6-(pyridoxal phosphate)lysine. Arg-136 is a binding site for substrate. Tyr-257 (proton acceptor; specific for L-alanine) is an active-site residue. Met-305 provides a ligand contact to substrate. The tract at residues 373-397 (ANRPTEAMSNPSRAKSRPMDKQALI) is disordered.

Belongs to the alanine racemase family. Requires pyridoxal 5'-phosphate as cofactor.

The catalysed reaction is L-alanine = D-alanine. The protein operates within amino-acid biosynthesis; D-alanine biosynthesis; D-alanine from L-alanine: step 1/1. Its pathway is cell wall biogenesis; peptidoglycan biosynthesis. Its function is as follows. Catalyzes the interconversion of L-alanine and D-alanine. Provides the D-alanine required for cell wall biosynthesis. In Mesorhizobium japonicum (strain LMG 29417 / CECT 9101 / MAFF 303099) (Mesorhizobium loti (strain MAFF 303099)), this protein is Alanine racemase, biosynthetic (alr).